We begin with the raw amino-acid sequence, 237 residues long: MGYLQLMGFGPDGWGSDMLRATGMTVAVASSAFTIGLVFGCLGATASFSKSLALQAAASSYTTALRGIPDLLVIYLFYFGSSSLISGVGSLFGSDGFVSAPAFLTGALAIGLVSAAYQTQVLRGAVLALNKGEIEAGRAYGMGYFLLFRRIILPQAARHALPGVGNVWQLVLKESALISVIGLVELMRQAQVGSGSTRQPFSFYLTAAALYLLITFISGQAFRLAEARSMRGLRRGV.

An ABC transmembrane type-1 domain is found at 22-222 (TGMTVAVASS…LITFISGQAF (201 aa)). The next 4 helical transmembrane spans lie at 24-44 (MTVAVASSAFTIGLVFGCLGA), 72-92 (LVIYLFYFGSSSLISGVGSLF), 96-116 (GFVSAPAFLTGALAIGLVSAA), and 201-221 (FSFYLTAAALYLLITFISGQA).

It belongs to the binding-protein-dependent transport system permease family. HisMQ subfamily.

The protein resides in the cell inner membrane. Component of the octopine active transport system probably consisting of four subunits: Q, M, P and T. The protein is Octopine transport system permease protein OccQ (occQ) of Rhizobium meliloti (Ensifer meliloti).